A 359-amino-acid polypeptide reads, in one-letter code: Diacyltrehalose acyltransferase Chp2 (359 aa).

The chain crosses the membrane as a helical span at residues 4–24 (VIAGAFAVWLVGWAGGFGTAI). The region spanning 79 to 316 (PNAKHDLIDY…VLQPQIDAAY (238 aa)) is the PE-PPE domain.

This sequence belongs to the mycobacterial PPE family.

The protein resides in the cell inner membrane. Activity is probably potentiated by the DAT/PAT transporter MmpL10. Inhibited by the lipase inhibitor tetrahydrolipstatin (THL). Involved in the final steps of polyacyltrehalose (PAT) biosynthesis. Catalyzes the transfer of three mycolipenoyl groups onto diacyltrehalose (DAT) to form PAT. The polypeptide is Diacyltrehalose acyltransferase Chp2 (Mycobacterium tuberculosis (strain ATCC 25618 / H37Rv)).